The primary structure comprises 475 residues: Adenosylhomocysteinase (475 aa).

3 residues coordinate substrate: Thr63, Asp138, and Glu199. Residue 200-202 (TTT) coordinates NAD(+). Lys229 and Asp233 together coordinate substrate. Residues Asn234, 263–268 (GYGDVG), Glu286, Asn321, 342–344 (IGH), and Asn389 contribute to the NAD(+) site.

Belongs to the adenosylhomocysteinase family. NAD(+) serves as cofactor.

It localises to the cytoplasm. It carries out the reaction S-adenosyl-L-homocysteine + H2O = L-homocysteine + adenosine. Its pathway is amino-acid biosynthesis; L-homocysteine biosynthesis; L-homocysteine from S-adenosyl-L-homocysteine: step 1/1. Functionally, may play a key role in the regulation of the intracellular concentration of adenosylhomocysteine. The chain is Adenosylhomocysteinase from Solibacter usitatus (strain Ellin6076).